Here is a 672-residue protein sequence, read N- to C-terminus: tRNA 5-methylaminomethyl-2-thiouridine biosynthesis bifunctional protein MnmC (672 aa).

The tRNA (mnm(5)s(2)U34)-methyltransferase stretch occupies residues 1–241; that stretch reads MHKVQFADVH…KRECLQGVKA (241 aa). The segment at 269–672 is FAD-dependent cmnm(5)s(2)U34 oxidoreductase; it reads IGGGIASVFS…LLKGSQVKQG (404 aa).

This sequence in the N-terminal section; belongs to the methyltransferase superfamily. tRNA (mnm(5)s(2)U34)-methyltransferase family. The protein in the C-terminal section; belongs to the DAO family. The cofactor is FAD.

Its subcellular location is the cytoplasm. The enzyme catalyses 5-aminomethyl-2-thiouridine(34) in tRNA + S-adenosyl-L-methionine = 5-methylaminomethyl-2-thiouridine(34) in tRNA + S-adenosyl-L-homocysteine + H(+). In terms of biological role, catalyzes the last two steps in the biosynthesis of 5-methylaminomethyl-2-thiouridine (mnm(5)s(2)U) at the wobble position (U34) in tRNA. Catalyzes the FAD-dependent demodification of cmnm(5)s(2)U34 to nm(5)s(2)U34, followed by the transfer of a methyl group from S-adenosyl-L-methionine to nm(5)s(2)U34, to form mnm(5)s(2)U34. The sequence is that of tRNA 5-methylaminomethyl-2-thiouridine biosynthesis bifunctional protein MnmC from Pasteurella multocida (strain Pm70).